A 125-amino-acid polypeptide reads, in one-letter code: UPF0102 protein ABO_0585 (125 aa).

Belongs to the UPF0102 family.

The sequence is that of UPF0102 protein ABO_0585 from Alcanivorax borkumensis (strain ATCC 700651 / DSM 11573 / NCIMB 13689 / SK2).